The sequence spans 821 residues: Fibroblast growth factor receptor 2 (821 aa).

An N-terminal signal peptide occupies residues 1–21 (MVSWGRFICLVVVTMATLSLA). The Extracellular portion of the chain corresponds to 22–377 (RPSFSLVEDT…EITASPDYLE (356 aa)). Residues 25–125 (FSLVEDTTLE…ETWYFMVNVT (101 aa)) form the Ig-like C2-type 1 domain. C62 and C107 are oxidised to a cystine. N-linked (GlcNAc...) asparagine glycans are attached at residues N83 and N123. Positions 131–144 (GDDEDDTDGAEDFV) are enriched in acidic residues. Residues 131–151 (GDDEDDTDGAEDFVSENSNNK) form a disordered region. 2 Ig-like C2-type domains span residues 154 to 247 (PYWT…YHLD) and 256 to 358 (PILQ…AWLT). The heparin-binding stretch occupies residues 161-178 (KMEKRLHAVPAANTVKFR). Residues C179 and C231 are joined by a disulfide bond. N-linked (GlcNAc...) asparagine glycosylation is found at N228, N241, N265, N297, N318, and N331. C278 and C342 form a disulfide bridge. A helical transmembrane segment spans residues 378 to 398 (IAIYCIGVFLIACMVVTVILC). The Cytoplasmic segment spans residues 399 to 821 (RMKNTTKKPD…YPHINGSVKT (423 aa)). The residue at position 466 (Y466) is a Phosphotyrosine; by autocatalysis. A Protein kinase domain is found at 481 to 770 (LTLGKPLGEG…LTLTTNEEYL (290 aa)). ATP is bound by residues 487–495 (LGEGCFGQV), K517, 565–567 (EYA), and N571. Phosphotyrosine; by autocatalysis is present on residues Y586 and Y588. D626 functions as the Proton acceptor in the catalytic mechanism. Phosphotyrosine; by autocatalysis is present on residues Y656, Y657, and Y769. Residue S780 is modified to Phosphoserine.

The protein belongs to the protein kinase superfamily. Tyr protein kinase family. Fibroblast growth factor receptor subfamily. As to quaternary structure, monomer. Homodimer after ligand binding. Interacts predominantly with FGF1 and FGF2, but can also interact with FGF3, FGF4, FGF6, FGF7, FGF8, FGF9, FGF10, FGF17, FGF18 and FGF22 (in vitro). Ligand specificity is determined by tissue-specific expression of isoforms, and differences in the third Ig-like domain are crucial for ligand specificity. Isoform 1 has high affinity for FGF1 and FGF2, but low affinity for FGF7. Isoform 3 has high affinity for FGF1 and FGF7, and has much higher affinity for FGF7 than isoform 1 (in vitro). Affinity for fibroblast growth factors (FGFs) is increased by heparan sulfate glycosaminoglycans that function as coreceptors. Likewise, KLB increases the affinity for FGF19 and FGF21. Interacts with PLCG1, GRB2 and PAK4. Interacts with FLRT2. In terms of processing, autophosphorylated. Binding of FGF family members together with heparan sulfate proteoglycan or heparin promotes receptor dimerization and autophosphorylation on several tyrosine residues. Autophosphorylation occurs in trans between the two FGFR molecules present in the dimer. Phosphorylation at Tyr-769 is essential for interaction with PLCG1. Post-translationally, N-glycosylated in the endoplasmic reticulum. The N-glycan chains undergo further maturation to an Endo H-resistant form in the Golgi apparatus. Ubiquitinated. FGFR2 is rapidly ubiquitinated after autophosphorylation, leading to internalization and degradation. Subject to degradation both in lysosomes and by the proteasome.

The protein resides in the cell membrane. It localises to the golgi apparatus. The protein localises to the cytoplasmic vesicle. It is found in the secreted. The catalysed reaction is L-tyrosyl-[protein] + ATP = O-phospho-L-tyrosyl-[protein] + ADP + H(+). Its activity is regulated as follows. Present in an inactive conformation in the absence of bound ligand. Ligand binding leads to dimerization and activation by autophosphorylation on tyrosine residues. Inhibited by ARQ 523 and ARQ 069; these compounds maintain the kinase in an inactive conformation and inhibit autophosphorylation. In terms of biological role, tyrosine-protein kinase that acts as a cell-surface receptor for fibroblast growth factors and plays an essential role in the regulation of cell proliferation, differentiation, migration and apoptosis, and in the regulation of embryonic development. Required for normal embryonic patterning, trophoblast function, limb bud development, lung morphogenesis, osteogenesis and skin development. Plays an essential role in the regulation of osteoblast differentiation, proliferation and apoptosis, and is required for normal skeleton development. Promotes cell proliferation in keratinocytes and immature osteoblasts, but promotes apoptosis in differentiated osteoblasts. Phosphorylates PLCG1, FRS2 and PAK4. Ligand binding leads to the activation of several signaling cascades. Activation of PLCG1 leads to the production of the cellular signaling molecules diacylglycerol and inositol 1,4,5-trisphosphate. Phosphorylation of FRS2 triggers recruitment of GRB2, GAB1, PIK3R1 and SOS1, and mediates activation of RAS, MAPK1/ERK2, MAPK3/ERK1 and the MAP kinase signaling pathway, as well as of the AKT1 signaling pathway. FGFR2 signaling is down-regulated by ubiquitination, internalization and degradation. Mutations that lead to constitutive kinase activation or impair normal FGFR2 maturation, internalization and degradation lead to aberrant signaling. Over-expressed FGFR2 promotes activation of STAT1. This is Fibroblast growth factor receptor 2 (FGFR2) from Homo sapiens (Human).